An 866-amino-acid chain; its full sequence is DNA replication licensing factor MCM4 (866 aa).

Disordered regions lie at residues 1–67 (MSSP…TSPA), 81–107 (SPLNYGTPSSMGSIRTPRSGIRGTPLR), and 124–145 (GGGSGLEPIPEKGSETTDPVSE). Composition is skewed to polar residues over residues 47-63 (DNISLPPTSPGNISLPA) and 81-93 (SPLNYGTPSSMGS). Residues S55 and S81 each carry the phosphoserine modification. T87 is subject to Phosphothreonine. The region spanning 460–669 (IYDRLARAIA…FDKRLASHLV (210 aa)) is the MCM domain. 512-519 (GDPGTSKS) contacts ATP. Residues 644–647 (SRFD) carry the Arginine finger motif.

This sequence belongs to the MCM family. As to quaternary structure, component of the Mcm2-7 complex. The complex forms a toroidal hexameric ring with the proposed subunit order Mcm2-Mcm6-Mcm4-Mcm7-Mcm3-Mcm5. Post-translationally, phosphorylated by the catalytic component of the Dbf4-dependent kinase (DDK) complex Cdc7.

Its subcellular location is the nucleus. It catalyses the reaction ATP + H2O = ADP + phosphate + H(+). In terms of biological role, acts as a component of the Mcm2-7 complex (Mcm complex) which is the putative replicative helicase essential for 'once per cell cycle' DNA replication initiation and elongation in eukaryotic cells. The active ATPase sites in the Mcm2-7 ring are formed through the interaction surfaces of two neighboring subunits such that a critical structure of a conserved arginine finger motif is provided in trans relative to the ATP-binding site of the Walker A box of the adjacent subunit. The six ATPase active sites, however, are likely to contribute differentially to the complex helicase activity. Required for DNA replication and cell proliferation. Essential role in mitotic DNA replication but not in endoreplication. The polypeptide is DNA replication licensing factor MCM4 (dpa) (Drosophila melanogaster (Fruit fly)).